Consider the following 712-residue polypeptide: DNA ligase (712 aa).

The segment at 1–22 is disordered; sequence MVQKNEHQGGQSQHSLFAAGPT. NAD(+) contacts are provided by residues 53 to 57 and aspartate 138; that span reads DDQFD. Lysine 140 serves as the catalytic N6-AMP-lysine intermediate. The NAD(+) site is built by arginine 161, glutamate 199, lysine 318, and lysine 342. Zn(2+) contacts are provided by cysteine 436, cysteine 439, cysteine 454, and cysteine 459. The disordered stretch occupies residues 612–631; the sequence is RGGRSGGGSSGSTGEGGLAS. Residues 614–630 show a composition bias toward gly residues; the sequence is GRSGGGSSGSTGEGGLA. Residues 629-712 form the BRCT domain; sequence LASGPLAGKN…MLREAKAASE (84 aa).

Belongs to the NAD-dependent DNA ligase family. LigA subfamily. It depends on Mg(2+) as a cofactor. Requires Mn(2+) as cofactor.

The enzyme catalyses NAD(+) + (deoxyribonucleotide)n-3'-hydroxyl + 5'-phospho-(deoxyribonucleotide)m = (deoxyribonucleotide)n+m + AMP + beta-nicotinamide D-nucleotide.. In terms of biological role, DNA ligase that catalyzes the formation of phosphodiester linkages between 5'-phosphoryl and 3'-hydroxyl groups in double-stranded DNA using NAD as a coenzyme and as the energy source for the reaction. It is essential for DNA replication and repair of damaged DNA. The polypeptide is DNA ligase (Desulfovibrio desulfuricans (strain ATCC 27774 / DSM 6949 / MB)).